A 577-amino-acid chain; its full sequence is Insulin-like growth factor 2 mRNA-binding protein 1 (577 aa).

2 RRM domains span residues 2 to 75 (NKLY…HSVP) and 81 to 156 (RKIQ…YIPD). A phosphoserine mark is found at S12 and S73. The interval 160 to 190 (AQGPENGRRGGFGSRGQPRQGSPVAAGAPAK) is disordered. The residue at position 181 (S181) is a Phosphoserine. 4 KH domains span residues 195-260 (DIPL…CKMI), 276-343 (EVPL…EQEI), 405-470 (QEMV…QGRI), and 487-553 (KLET…QRKI). Residues 310 to 324 (ITISSLQDLTLYNPE) form a sufficient for nuclear export region. Residues 485 to 495 (EVKLETHIRVP) are sufficient for nuclear export. T528 carries the phosphothreonine modification.

The protein belongs to the RRM IMP/VICKZ family. Can form homodimers and heterodimers with IGF2BP1 and IGF2BP3. Component of the coding region determinant (CRD)-mediated complex, composed of DHX9, HNRNPU, IGF2BP1, SYNCRIP and YBX1. During HCV infection, identified in a HCV IRES-mediated translation complex, at least composed of EIF3C, IGF2BP1, RPS3 and HCV RNA-replicon. Interacts (via the KH domains) with HIV-1 GAG (via the second zinc finger motif of NC). Associates (via the RRM domains and KH domains) with HIV-1 particles. Identified in a mRNP complex, composed of at least DHX9, DDX3X, ELAVL1, HNRNPU, IGF2BP1, ILF3, PABPC1, PCBP2, PTBP2, STAU1, STAU2, SYNCRIP and YBX1. Identified in a IGF2BP1-dependent mRNP granule complex containing untranslated mRNAs. Interacts with DHX9, ELAVL2, HNRNPA2B1, HNRNPC, HNRNPH1, HNRNPU, IGF2BP2, ILF2, and YBX1. Interacts with FMR1. Component of a multisubunit autoregulatory RNP complex (ARC), at least composed of IGF2BP1, PABPC1 and CSDE1/UNR. Directly interacts with PABPC1. Component of a TAU mRNP complex, at least composed of IGF2BP1, ELAVL4 and G3BP. Interacts with ELAVL4 in an RNA-dependent manner. Associates with microtubules and polysomes. Interacts with AGO1 and AGO2. Interacts with ELAVL1 and MATR3. Interacts (via KH3 and KH4 domains) with SEPIN14P20 peptide RBRP; the interaction results in increased binding of IGF2BP1 to N6-methyladenosine (m6A)-containing mRNAs. Phosphorylated at Ser-181 by mTORC2 cotranslationally, promoting binding to the 3'-UTR of IGF2 mRNA. Mainly expressed in the embryo, including in fetal liver, fetal lung, fetal kidney, fetal thymus (at protein level). Also expressed follicles of ovary, as well as in gonocytes of testis, spermatogonia, semen, oocytes and placenta (at protein level). Expressed in various cancers, including testis and lung cancers (at protein level), as well as kidney, prostate and trachea cancers.

The protein resides in the nucleus. The protein localises to the cytoplasm. It localises to the perinuclear region. Its subcellular location is the P-body. It is found in the stress granule. The protein resides in the cell projection. The protein localises to the lamellipodium. It localises to the dendrite. Its subcellular location is the dendritic spine. It is found in the growth cone. The protein resides in the filopodium. The protein localises to the axon. Its function is as follows. RNA-binding factor that recruits target transcripts to cytoplasmic protein-RNA complexes (mRNPs). This transcript 'caging' into mRNPs allows mRNA transport and transient storage. It also modulates the rate and location at which target transcripts encounter the translational apparatus and shields them from endonuclease attacks or microRNA-mediated degradation. Preferentially binds to N6-methyladenosine (m6A)-containing mRNAs and increases their stability. Plays a direct role in the transport and translation of transcripts required for axonal regeneration in adult sensory neurons. Regulates localized beta-actin/ACTB mRNA translation, a crucial process for cell polarity, cell migration and neurite outgrowth. Co-transcriptionally associates with the ACTB mRNA in the nucleus. This binding involves a conserved 54-nucleotide element in the ACTB mRNA 3'-UTR, known as the 'zipcode'. The RNP thus formed is exported to the cytoplasm, binds to a motor protein and is transported along the cytoskeleton to the cell periphery. During transport, prevents ACTB mRNA from being translated into protein. When the RNP complex reaches its destination near the plasma membrane, IGF2BP1 is phosphorylated. This releases the mRNA, allowing ribosomal 40S and 60S subunits to assemble and initiate ACTB protein synthesis. Monomeric ACTB then assembles into the subcortical actin cytoskeleton. During neuronal development, key regulator of neurite outgrowth, growth cone guidance and neuronal cell migration, presumably through the spatiotemporal fine tuning of protein synthesis, such as that of ACTB. May regulate mRNA transport to activated synapses. Binds to and stabilizes ABCB1/MDR-1 mRNA. During interstinal wound repair, interacts with and stabilizes PTGS2 transcript. PTGS2 mRNA stabilization may be crucial for colonic mucosal wound healing. Binds to the 3'-UTR of IGF2 mRNA by a mechanism of cooperative and sequential dimerization and regulates IGF2 mRNA subcellular localization and translation. Binds to MYC mRNA, in the coding region instability determinant (CRD) of the open reading frame (ORF), hence preventing MYC cleavage by endonucleases and possibly microRNA targeting to MYC-CRD. Binding to MYC mRNA is enhanced by m6A-modification of the CRD. Binds to the 3'-UTR of CD44 mRNA and stabilizes it, hence promotes cell adhesion and invadopodia formation in cancer cells. Binds to the oncofetal H19 transcript and to the neuron-specific TAU mRNA and regulates their localizations. Binds to and stabilizes BTRC/FBW1A mRNA. Binds to the adenine-rich autoregulatory sequence (ARS) located in PABPC1 mRNA and represses its translation. PABPC1 mRNA-binding is stimulated by PABPC1 protein. Prevents BTRC/FBW1A mRNA degradation by disrupting microRNA-dependent interaction with AGO2. Promotes the directed movement of tumor-derived cells by fine-tuning intracellular signaling networks. Binds to MAPK4 3'-UTR and inhibits its translation. Interacts with PTEN transcript open reading frame (ORF) and prevents mRNA decay. This combined action on MAPK4 (down-regulation) and PTEN (up-regulation) antagonizes HSPB1 phosphorylation, consequently it prevents G-actin sequestration by phosphorylated HSPB1, allowing F-actin polymerization. Hence enhances the velocity of cell migration and stimulates directed cell migration by PTEN-modulated polarization. Interacts with Hepatitis C virus (HCV) 5'-UTR and 3'-UTR and specifically enhances translation at the HCV IRES, but not 5'-cap-dependent translation, possibly by recruiting eIF3. Interacts with HIV-1 GAG protein and blocks the formation of infectious HIV-1 particles. Reduces HIV-1 assembly by inhibiting viral RNA packaging, as well as assembly and processing of GAG protein on cellular membranes. During cellular stress, such as oxidative stress or heat shock, stabilizes target mRNAs that are recruited to stress granules, including CD44, IGF2, MAPK4, MYC, PTEN, RAPGEF2 and RPS6KA5 transcripts. The chain is Insulin-like growth factor 2 mRNA-binding protein 1 (IGF2BP1) from Homo sapiens (Human).